A 37-amino-acid polypeptide reads, in one-letter code: ACVGDGQRCASWSGPYCCDGYYCSCRSMPYCRCRNNS.

Intrachain disulfides connect Cys2-Cys18, Cys9-Cys23, Cys17-Cys33, and Cys25-Cys31. Residue Ser37 is modified to Serine amide.

It belongs to the neurotoxin 07 (Beta/delta-agtx) family. 02 (aga-3) subfamily. As to expression, expressed by the venom gland.

The protein localises to the secreted. In terms of biological role, insecticidal toxin. Binds to site 4 of insect voltage-gated sodium channel (Nav) and inhibits channel inactivation. In vivo, it lethal to lepidopteran larvae. Has no adverse affects when intracerebroventricularly injected in mice at a dose of 0.2 ug, but causes reversible paralysis of legs when injected intracerebroventricularly in mice at a dose of 2.0 ug. The protein is Delta-amaurobitoxin-Pl1b of Pireneitega luctuosa (Tangled nest spider).